Here is a 156-residue protein sequence, read N- to C-terminus: Small ribosomal subunit protein uS7c (156 aa).

Belongs to the universal ribosomal protein uS7 family. As to quaternary structure, part of the 30S ribosomal subunit.

It localises to the plastid. The protein resides in the chloroplast. Functionally, one of the primary rRNA binding proteins, it binds directly to 16S rRNA where it nucleates assembly of the head domain of the 30S subunit. This is Small ribosomal subunit protein uS7c (rps7) from Mesostigma viride (Green alga).